The primary structure comprises 233 residues: Enolase-phosphatase E1 (233 aa).

2 residues coordinate Mg(2+): Asp-16 and Glu-18. Substrate-binding positions include 131–132 (SS) and Lys-167. Asp-193 serves as a coordination point for Mg(2+).

The protein belongs to the HAD-like hydrolase superfamily. MasA/MtnC family. Monomer. The cofactor is Mg(2+).

The protein resides in the cytoplasm. It is found in the nucleus. The enzyme catalyses 5-methylsulfanyl-2,3-dioxopentyl phosphate + H2O = 1,2-dihydroxy-5-(methylsulfanyl)pent-1-en-3-one + phosphate. It participates in amino-acid biosynthesis; L-methionine biosynthesis via salvage pathway; L-methionine from S-methyl-5-thio-alpha-D-ribose 1-phosphate: step 3/6. It functions in the pathway amino-acid biosynthesis; L-methionine biosynthesis via salvage pathway; L-methionine from S-methyl-5-thio-alpha-D-ribose 1-phosphate: step 4/6. In terms of biological role, bifunctional enzyme that catalyzes the enolization of 2,3-diketo-5-methylthiopentyl-1-phosphate (DK-MTP-1-P) into the intermediate 2-hydroxy-3-keto-5-methylthiopentenyl-1-phosphate (HK-MTPenyl-1-P), which is then dephosphorylated to form the acireductone 1,2-dihydroxy-3-keto-5-methylthiopentene (DHK-MTPene). This is Enolase-phosphatase E1 from Meyerozyma guilliermondii (strain ATCC 6260 / CBS 566 / DSM 6381 / JCM 1539 / NBRC 10279 / NRRL Y-324) (Yeast).